Reading from the N-terminus, the 312-residue chain is Taste receptor type 2 member 135 (312 aa).

Residues 1-19 (MSTGHTVLGCQTTDKTVVT) are Extracellular-facing. Residues 20–40 (LFIILVLLCLVAVVGNGFIII) form a helical membrane-spanning segment. Residues 41 to 66 (ALGMKWLLRRTLSAHNKLLISLAASR) lie on the Cytoplasmic side of the membrane. The helical transmembrane segment at 67-87 (FCLQCVVIGKNIYVFLNPTSF) threads the bilayer. Topologically, residues 88–97 (PYNPVIQLLN) are extracellular. Residues 98–118 (LMWDFLTAATIWLCSLLGFFY) form a helical membrane-spanning segment. The Cytoplasmic segment spans residues 119-140 (CVKIATLTHPVFVWLKYRLPGW). Residues 141-161 (VPWMLLSAVGMSSLTSILCFI) traverse the membrane as a helical segment. Residues 162–198 (GNYMIYQNHAKSGHQPWNVTGNSLRHSLEKFYFFSIK) lie on the Extracellular side of the membrane. Asn179 carries N-linked (GlcNAc...) asparagine glycosylation. A helical transmembrane segment spans residues 199 to 219 (IIMWTIPTVVFSIFMSLLLVS). Topologically, residues 220 to 244 (LVRHMKKTFLALSELRDVWAQAHFK) are cytoplasmic. A helical membrane pass occupies residues 245–265 (ALLPLLSFIVLFISCFLTLVL). The Extracellular portion of the chain corresponds to 266-277 (SSASNTPYQEFR). A helical transmembrane segment spans residues 278–298 (YWMWQVVIHLCTVIHPIVILF). The Cytoplasmic portion of the chain corresponds to 299–312 (SNPVLRVVIKRGCC).

The protein belongs to the G-protein coupled receptor T2R family.

Its subcellular location is the membrane. Its function is as follows. Putative taste receptor which may play a role in the perception of bitterness. The chain is Taste receptor type 2 member 135 (Tas2r135) from Mus musculus (Mouse).